The chain runs to 267 residues: Acryloyl-CoA reductase electron transfer subunit gamma (267 aa).

In terms of assembly, heterohexadecamer; tetramer of tetramers. Each tetramer is composed of 2 alpha (AcrC), a beta (AcrA) and a gamma (AcrB) subunit.

The protein localises to the cytoplasm. Part of the ETF-acryloyl-CoA reductase complex involved in the pathway of L-alanine fermentation. The electron transfer flavoprotein (ETF) serves as a specific electron acceptor for acryloyl-CoA reductase. The polypeptide is Acryloyl-CoA reductase electron transfer subunit gamma (acrB) (Anaerotignum propionicum (Clostridium propionicum)).